Reading from the N-terminus, the 315-residue chain is Borealin (315 aa).

2 disordered regions span residues isoleucine 103 to glycine 126 and leucine 138 to methionine 226. Phosphothreonine is present on threonine 146. Serine 152 carries the post-translational modification Phosphoserine. Positions alanine 153–arginine 162 are enriched in basic residues. Position 163 is a phosphoserine (serine 163). Positions serine 178–asparagine 188 are enriched in low complexity. Serine 205 is modified (phosphoserine). The residue at position 209 (threonine 209) is a Phosphothreonine. Residues serine 218, serine 220, and serine 244 each carry the phosphoserine modification.

Belongs to the borealin family. Component of the CPC complex. As to expression, ubiquitously expressed in the early embryo. Expression is restricted to the ventral nerve cord and brain during later embryonic stages.

Its subcellular location is the nucleus. The protein localises to the chromosome. The protein resides in the centromere. It localises to the cytoplasm. It is found in the cytoskeleton. Its subcellular location is the spindle. Component of the chromosomal passenger complex (CPC), a complex that acts as a key regulator of embryonic mitosis. The CPC complex has essential functions at the centromere for ensuring sister chromatid cohesion, recruitment of the CPC to kinetochores, and chromosome alignment and segregation. There is no function in meiotic histone phosphorylation or spindle formation. This is Borealin (borr) from Drosophila melanogaster (Fruit fly).